The chain runs to 282 residues: HTH-type transcriptional activator RhaR (282 aa).

Residues 179–277 form the HTH araC/xylS-type domain; that stretch reads DKLITALAGS…GMTPVQWRHR (99 aa). 2 consecutive DNA-binding regions (H-T-H motif) follow at residues 196–217 and 244–267; these read EKFCEQEQCSERALRQQFRTQT and VSEVAMRCGFEDSNYFSVVFNREV.

As to quaternary structure, binds DNA as a dimer.

It localises to the cytoplasm. Functionally, activates expression of the rhaSR operon in response to L-rhamnose. This Enterobacter sp. (strain 638) protein is HTH-type transcriptional activator RhaR.